The chain runs to 521 residues: Probable protein phosphatase 2C 16 (521 aa).

One can recognise a PPM-type phosphatase domain in the interval 21 to 327 (KYVVSSMQGW…ENTTVILVQF (307 aa)). 4 residues coordinate Mn(2+): aspartate 57, glycine 58, glutamine 276, and glutamate 318. A disordered region spans residues 354–431 (AAPAGASDTS…ADADDGAPKP (78 aa)).

The protein belongs to the PP2C family. Mg(2+) serves as cofactor. It depends on Mn(2+) as a cofactor.

The enzyme catalyses O-phospho-L-seryl-[protein] + H2O = L-seryl-[protein] + phosphate. It catalyses the reaction O-phospho-L-threonyl-[protein] + H2O = L-threonyl-[protein] + phosphate. The chain is Probable protein phosphatase 2C 16 from Oryza sativa subsp. japonica (Rice).